The chain runs to 244 residues: Protein-L-isoaspartate O-methyltransferase 2 (244 aa).

Ser88 is an active-site residue.

The protein belongs to the methyltransferase superfamily. L-isoaspartyl/D-aspartyl protein methyltransferase family.

Its subcellular location is the cytoplasm. The catalysed reaction is [protein]-L-isoaspartate + S-adenosyl-L-methionine = [protein]-L-isoaspartate alpha-methyl ester + S-adenosyl-L-homocysteine. Its function is as follows. Catalyzes the methyl esterification of L-isoaspartyl residues in peptides and proteins that result from spontaneous decomposition of normal L-aspartyl and L-asparaginyl residues. It plays a role in the repair and/or degradation of damaged proteins. This chain is Protein-L-isoaspartate O-methyltransferase 2, found in Shewanella sediminis (strain HAW-EB3).